A 487-amino-acid polypeptide reads, in one-letter code: L-tartrate/succinate antiporter (487 aa).

Helical transmembrane passes span 10–30 (YLAPLAVIAIIALLPLPAGLE), 33–53 (TWLYFAVFTGVIVGLILEPVP), 54–74 (GAVVAMVGISIIAILSPWLLF), 93–113 (WAVSGFSNSVIWLIFAAFMFG), 137–157 (TLFLGYAVMFSELILAPVTPS), 189–209 (IGSYIMWMGIVADCVTSAIFL), 236–256 (FLGMLPLSILLVLLVPWLAYV), 292–312 (LMVGALVLWIFGGDYIDAAMV), 313–333 (GYSVVALMLLLRIICWDDIVS), 340–360 (VFFWLASLITLATGLNNTGFI), 370–390 (SLSGYSPTIVMVALIVVFYLL), 393–413 (FFASATAYTSALAPMMIAAAL), 418–438 (IPLPVFCLMVGAAIGLGSILT), and 462–482 (LGAIFGLIFLVLLVITGLLWM).

The protein belongs to the SLC13A/DASS transporter (TC 2.A.47) family. DIT1 subfamily.

It localises to the cell inner membrane. It carries out the reaction (2R,3R)-tartrate(out) + succinate(in) = (2R,3R)-tartrate(in) + succinate(out). In terms of biological role, catalyzes the uptake of tartrate in exchange for intracellular succinate. Essential for anaerobic L-tartrate fermentation. This chain is L-tartrate/succinate antiporter (ttdT), found in Escherichia coli O6:H1 (strain CFT073 / ATCC 700928 / UPEC).